A 254-amino-acid chain; its full sequence is MELQIKIQNFQGPFDLLLHLIKKNQLDIYNINISEITGQYMEYIESLKEMDLEVTSEFIVIASTLLQIKSRELLPKIQDEEEEEISEENPEKILLDKLIEYKKFKNVASYLKGRLEKGFTVFSKKPEIIEKKEEEDKDIFIDVTILELYNLYNELITKYKDKINLSNTIPEEIELEEFKIGDKMNYLKSRIIENKNLSFSQISKECSCKGEVIVTFLALLELIRIKIVKVVQEGNFKEIYLERMEENEADELYY.

Belongs to the ScpA family. As to quaternary structure, component of a cohesin-like complex composed of ScpA, ScpB and the Smc homodimer, in which ScpA and ScpB bind to the head domain of Smc. The presence of the three proteins is required for the association of the complex with DNA.

The protein resides in the cytoplasm. In terms of biological role, participates in chromosomal partition during cell division. May act via the formation of a condensin-like complex containing Smc and ScpB that pull DNA away from mid-cell into both cell halves. The polypeptide is Segregation and condensation protein A (Clostridium tetani (strain Massachusetts / E88)).